The primary structure comprises 164 residues: Putative deoxyuridine 5'-triphosphate nucleotidohydrolase (164 aa).

65 to 67 contributes to the substrate binding site; that stretch reads RSG. Residue Lys-71 is modified to N6-acetyllysine; by host. Substrate contacts are provided by residues 79 to 82, Gly-90, and 138 to 139; these read GVVD and YG.

The protein belongs to the dUTPase family. The cofactor is Mg(2+).

It catalyses the reaction dUTP + H2O = dUMP + diphosphate + H(+). Functionally, this enzyme is involved in nucleotide metabolism: it produces dUMP, the immediate precursor of thymidine nucleotides and it decreases the intracellular concentration of dUTP so that uracil cannot be incorporated into DNA. This Dryophytes versicolor (chameleon treefrog) protein is Putative deoxyuridine 5'-triphosphate nucleotidohydrolase.